A 359-amino-acid polypeptide reads, in one-letter code: Nicotinate-nucleotide--dimethylbenzimidazole phosphoribosyltransferase (359 aa).

The active-site Proton acceptor is Glu-318.

The protein belongs to the CobT family. As to quaternary structure, homodimer.

It carries out the reaction 5,6-dimethylbenzimidazole + nicotinate beta-D-ribonucleotide = alpha-ribazole 5'-phosphate + nicotinate + H(+). Its pathway is nucleoside biosynthesis; alpha-ribazole biosynthesis; alpha-ribazole from 5,6-dimethylbenzimidazole: step 1/2. Its function is as follows. Catalyzes the synthesis of alpha-ribazole-5'-phosphate from nicotinate mononucleotide (NAMN) and 5,6-dimethylbenzimidazole (DMB). The sequence is that of Nicotinate-nucleotide--dimethylbenzimidazole phosphoribosyltransferase from Escherichia coli O127:H6 (strain E2348/69 / EPEC).